The sequence spans 387 residues: Dual specificity protein phosphatase MPK-4 (387 aa).

The span at 1-15 shows a compositional bias: polar residues; sequence MEQSQSQRQAWPSSS. A disordered region spans residues 1–27; the sequence is MEQSQSQRQAWPSSSAGGGKAQDSGVL. The Tyrosine-protein phosphatase domain occupies 35–182; the sequence is GPVSIDEVDT…LKLFRRMGCK (148 aa). Cys126 (phosphocysteine intermediate) is an active-site residue. The segment at 248–267 is disordered; it reads LEHKPRDRPPQEVVPKEKEE.

The protein belongs to the protein-tyrosine phosphatase family. Non-receptor class dual specificity subfamily. As to quaternary structure, interacts (via tyrosine-protein phosphatase domain) with bsk/JNK; the interaction dephosphorylates bsk.

It localises to the nucleus. Its subcellular location is the cytoplasm. The catalysed reaction is O-phospho-L-tyrosyl-[protein] + H2O = L-tyrosyl-[protein] + phosphate. It carries out the reaction O-phospho-L-seryl-[protein] + H2O = L-seryl-[protein] + phosphate. It catalyses the reaction O-phospho-L-threonyl-[protein] + H2O = L-threonyl-[protein] + phosphate. Its activity is regulated as follows. Inhibited by the tyrosine phosphatase inhibitor sodium vanadate. Its function is as follows. Dual specificity phosphatase; can dephosphorylate both phosphotyrosine and phosphoserine or phosphothreonine residues. May suppress bsk/JNK activation during the immune response. This chain is Dual specificity protein phosphatase MPK-4, found in Drosophila melanogaster (Fruit fly).